The primary structure comprises 141 residues: Sigma factor binding protein 2, chloroplastic (141 aa).

Over residues 1 to 20 the composition is skewed to polar residues; it reads MDQSSSTLLINQRKSSSSPT. Residues 1 to 36 form a disordered region; sequence MDQSSSTLLINQRKSSSSPTRIPPKQKRKSTTTHKP. The N-terminal 38 residues, 1 to 38, are a transit peptide targeting the chloroplast; it reads MDQSSSTLLINQRKSSSSPTRIPPKQKRKSTTTHKPIK. The Bipartite nuclear localization signal signature appears at 13–29; it reads RKSSSSPTRIPPKQKRK. Basic residues predominate over residues 24 to 36; that stretch reads PKQKRKSTTTHKP. Positions 55-64 match the VQ motif; that stretch reads FRELVQELTG.

As to quaternary structure, interacts with sigma factors in chloroplast. Interacts with WRKY33 in the nucleus.

The protein localises to the plastid. Its subcellular location is the chloroplast. It localises to the nucleus. In terms of biological role, functions as activator of WRKY33 in plant defense against necrotrophic pathogens by stimulating the DNA-binding activity of WRKY33. This is Sigma factor binding protein 2, chloroplastic (SIB2) from Arabidopsis thaliana (Mouse-ear cress).